Consider the following 1026-residue polypeptide: RecBCD enzyme subunit RecB (1026 aa).

One can recognise a UvrD-like helicase ATP-binding domain in the interval 1 to 438 (MSSFDIFSPT…LILDTNYRST (438 aa)). Residues 1-766 (MSSFDIFSPT…LANYANVTKH (766 aa)) are DNA-binding and helicase activity, interacts with RecC. An ATP-binding site is contributed by 21-28 (ASAGTGKT). Positions 815 to 1026 (SRTIHSFSST…KGNGFLQPGR (212 aa)) are nuclease activity, interacts with RecD and RecA. Mg(2+)-binding residues include His854, Asp940, and Asp953. Asp953 (for nuclease activity) is an active-site residue.

Belongs to the helicase family. UvrD subfamily. As to quaternary structure, heterotrimer of RecB, RecC and RecD. All subunits contribute to DNA-binding. Interacts with RecA. Mg(2+) is required as a cofactor.

It catalyses the reaction Exonucleolytic cleavage (in the presence of ATP) in either 5'- to 3'- or 3'- to 5'-direction to yield 5'-phosphooligonucleotides.. It carries out the reaction Couples ATP hydrolysis with the unwinding of duplex DNA by translocating in the 3'-5' direction.. The enzyme catalyses ATP + H2O = ADP + phosphate + H(+). A helicase/nuclease that prepares dsDNA breaks (DSB) for recombinational DNA repair. Binds to DSBs and unwinds DNA via a highly rapid and processive ATP-dependent bidirectional helicase activity. Unwinds dsDNA until it encounters a Chi (crossover hotspot instigator) sequence from the 3' direction. Cuts ssDNA a few nucleotides 3' to the Chi site. The properties and activities of the enzyme are changed at Chi. The Chi-altered holoenzyme produces a long 3'-ssDNA overhang and facilitates RecA-binding to the ssDNA for homologous DNA recombination and repair. Holoenzyme degrades any linearized DNA that is unable to undergo homologous recombination. In the holoenzyme this subunit contributes ATPase, 3'-5' helicase, exonuclease activity and loads RecA onto ssDNA. The protein is RecBCD enzyme subunit RecB of Chlamydia trachomatis serovar D (strain ATCC VR-885 / DSM 19411 / UW-3/Cx).